Consider the following 120-residue polypeptide: Small ribosomal subunit protein eS24 (120 aa).

The tract at residues 101 to 120 is disordered; sequence RDAGTKQKKGGSKGGQGAKG.

It belongs to the eukaryotic ribosomal protein eS24 family.

The chain is Small ribosomal subunit protein eS24 from Saccharolobus islandicus (strain M.16.27) (Sulfolobus islandicus).